We begin with the raw amino-acid sequence, 425 residues long: MAAKWEKLEGNVGVLTIEVDAKEVNNSIDAAFKKVVKTINVPGFRKGKMPRPLFEQRFGIESLYQDALDIILPKAYGEAIDEAGIFPVAHPEIDIEKFEKNANLIFTAKVTVKPEVKLGEYKGLAVEKVETTVTDEDVENELKSLQERQAELVVKEEGTVENGDTAVIDFEGFVDGEAFEGGKGENYSLAIGSGTFIPGFEEQVIGLKSGESKDVEVSFPEEYHAAELAGKPATFKVTVHEIKTKELPELNDEFAKEADEAVATLDELKAKLRTNLEEGKKHEAEHKVRDEVVELAAANAEIDIPEAMIDTELDRMVREFEQRLSQQGMNLELYYQFTGTDADKLKEQMKEDAQKRVRINLVLEAIIEAENIEVTEEEVTAEVEKMAEMYGMPVDAIKQALGSVDALAEDLKVRKAVDFLVENAA.

In terms of domain architecture, PPIase FKBP-type spans 163–248; that stretch reads GDTAVIDFEG…VHEIKTKELP (86 aa).

It belongs to the FKBP-type PPIase family. Tig subfamily.

The protein resides in the cytoplasm. It carries out the reaction [protein]-peptidylproline (omega=180) = [protein]-peptidylproline (omega=0). Its function is as follows. Involved in protein export. Acts as a chaperone by maintaining the newly synthesized protein in an open conformation. Functions as a peptidyl-prolyl cis-trans isomerase. The chain is Trigger factor from Bacillus anthracis (strain A0248).